A 398-amino-acid chain; its full sequence is Putative F-box protein At3g17620 (398 aa).

One can recognise an F-box domain in the interval 1-45 (MMSDLPRDLLEERLSRVPVKSLREARFTCKNWKTLSKKRSFTKKH).

The chain is Putative F-box protein At3g17620 from Arabidopsis thaliana (Mouse-ear cress).